A 103-amino-acid polypeptide reads, in one-letter code: Co-chaperonin GroES (103 aa).

The interval 31–67 (GGILLPDTAKEKPQVGEVAQVGPGKRNEDGSRQSPEV) is disordered.

Belongs to the GroES chaperonin family. As to quaternary structure, heptamer of 7 subunits arranged in a ring. Interacts with the chaperonin GroEL.

The protein localises to the cytoplasm. Functionally, together with the chaperonin GroEL, plays an essential role in assisting protein folding. The GroEL-GroES system forms a nano-cage that allows encapsulation of the non-native substrate proteins and provides a physical environment optimized to promote and accelerate protein folding. GroES binds to the apical surface of the GroEL ring, thereby capping the opening of the GroEL channel. The polypeptide is Co-chaperonin GroES (Prochlorococcus marinus (strain NATL2A)).